A 505-amino-acid polypeptide reads, in one-letter code: Trans-cinnamate 4-monooxygenase (505 aa).

Residues leucine 3–isoleucine 23 traverse the membrane as a helical segment. (E)-cinnamate is bound by residues arginine 212–glutamine 217 and alanine 305. Cysteine 446 contacts heme.

It belongs to the cytochrome P450 family. Requires heme as cofactor.

The protein resides in the membrane. The catalysed reaction is (E)-cinnamate + reduced [NADPH--hemoprotein reductase] + O2 = (E)-4-coumarate + oxidized [NADPH--hemoprotein reductase] + H2O + H(+). It functions in the pathway phenylpropanoid metabolism; trans-4-coumarate biosynthesis; trans-4-coumarate from trans-cinnamate: step 1/1. In terms of biological role, catalyzes the first oxidative step of the phenylpropanoid pathway in higher plants by transforming trans-cinnamate into p-coumarate. The compounds formed by this pathway are essential components for lignification, pollination, and defense against ultraviolet light, predators and pathogens. This is Trans-cinnamate 4-monooxygenase (CYP73A19) from Cicer arietinum (Chickpea).